We begin with the raw amino-acid sequence, 509 residues long: MATCSWAATTAAAAPPRPPARCRSRVAALRRTAAASAAAASCVLAEAPKGLKVEQADAVEPAAAAAARRDVGPDTVASIILGGGAGTRLFPLTRTRAKPAVPVGGCYRLIDIPMSNCINSKINKIYVLTQFNSQSLNRHIARTYNIGEGVGFGDGFVEVLAATQTTGESGKRWFQGTADAVRQFLWLFEDARLKRIENILILSGDHLYRMDYMDFVQKHVDKGADISVACVPVDESRASDFGLMKTDKNGRITDFLEKPKDESLKSMQLDMGTFGLRPEVADTCKYMASMGIYVFRTDILLRLLRGHYPTANDFGSEVIPMAAKDYNVQAYLFDGYWEDIGTIKSFFEANLALTDQSPNFYFYDPVKPIFTSPRFLPPTKVENCKVLNSIVSHGCFLTECSVDRSVIGVRSRLEPGVQLKDTMMMGADYYQTEAERFSELSDGKVPVGVGENTIIRNCIIDKNARIGKNVMIMNSQNVQEAERPLEGFYIRSGITVVLKNAVIPDGTVI.

Residues 1-36 constitute a chloroplast transit peptide; the sequence is MATCSWAATTAAAAPPRPPARCRSRVAALRRTAAAS.

Belongs to the bacterial/plant glucose-1-phosphate adenylyltransferase family. Heterotetramer composed of two small and two large subunits. Expressed in leaves and stems.

The protein resides in the plastid. The protein localises to the chloroplast. The enzyme catalyses alpha-D-glucose 1-phosphate + ATP + H(+) = ADP-alpha-D-glucose + diphosphate. It participates in glycan biosynthesis; starch biosynthesis. Its activity is regulated as follows. Activated by 3'phosphoglycerate, inhibited by orthophosphate. Allosteric regulation. Involved in synthesis of starch. Catalyzes the synthesis of ADP-glucose, a molecule that serves as an activated glycosyl donor for alpha-1,4-glucan synthesis. Essential for starch synthesis in leaf chloroplasts. The protein is Glucose-1-phosphate adenylyltransferase large subunit 4, chloroplastic/amyloplastic of Oryza sativa subsp. japonica (Rice).